The following is a 124-amino-acid chain: Transcription initiation factor TFIID subunit 13 (124 aa).

Residues M1 to E16 show a composition bias toward acidic residues. Positions M1–R28 are disordered. Residues F32 to S74 enclose the Histone-fold domain.

This sequence belongs to the TAF13 family. As to quaternary structure, component of the TFIID basal transcription factor complex, composed of TATA-box-binding protein TBP, and a number of TBP-associated factors (TAFs), including TAF1, TAF2, TAF3, TAF4, TAF5, TAF6, TAF7, TAF8, TAF9, TAF10, TAF11, TAF12 and TAF13. Interacts with TBP, and more strongly with TAF10 and TAF11.

Its subcellular location is the nucleus. The TFIID basal transcription factor complex plays a major role in the initiation of RNA polymerase II (Pol II)-dependent transcription. TFIID recognizes and binds promoters via its subunit TBP, a TATA-box-binding protein, and promotes assembly of the pre-initiation complex (PIC). The TFIID complex consists of TBP and TBP-associated factors (TAFs), including TAF1, TAF2, TAF3, TAF4, TAF5, TAF6, TAF7, TAF8, TAF9, TAF10, TAF11, TAF12 and TAF13. TAF13, together with TAF11 and TBP, play key roles during promoter binding by the TFIID and TFIIA transcription factor complexes. The sequence is that of Transcription initiation factor TFIID subunit 13 from Bos taurus (Bovine).